The primary structure comprises 108 residues: uncharacterized protein (108 aa).

3 helical membrane-spanning segments follow: residues I4–M24, G46–G66, and I81–L101.

Its subcellular location is the cell membrane. This is an uncharacterized protein from Escherichia coli O157:H7.